We begin with the raw amino-acid sequence, 184 residues long: Putative lyase MJ0807 (184 aa).

This sequence belongs to the chorismate pyruvate-lyase type 2 family.

The polypeptide is Putative lyase MJ0807 (Methanocaldococcus jannaschii (strain ATCC 43067 / DSM 2661 / JAL-1 / JCM 10045 / NBRC 100440) (Methanococcus jannaschii)).